We begin with the raw amino-acid sequence, 31 residues long: Photosystem II reaction center protein T (31 aa).

Residues 3-23 (ALVYTFLLIGTLGIIFFAIFF) form a helical membrane-spanning segment.

The protein belongs to the PsbT family. PSII is composed of 1 copy each of membrane proteins PsbA, PsbB, PsbC, PsbD, PsbE, PsbF, PsbH, PsbI, PsbJ, PsbK, PsbL, PsbM, PsbT, PsbY, PsbZ, Psb30/Ycf12, at least 3 peripheral proteins of the oxygen-evolving complex and a large number of cofactors. It forms dimeric complexes.

Its subcellular location is the plastid. It localises to the chloroplast thylakoid membrane. Its function is as follows. Found at the monomer-monomer interface of the photosystem II (PS II) dimer, plays a role in assembly and dimerization of PSII. PSII is a light-driven water plastoquinone oxidoreductase, using light energy to abstract electrons from H(2)O, generating a proton gradient subsequently used for ATP formation. The sequence is that of Photosystem II reaction center protein T from Stigeoclonium helveticum (Green alga).